A 223-amino-acid polypeptide reads, in one-letter code: Ras-related protein Rab-37 (223 aa).

The span at 1-13 shows a compositional bias: low complexity; it reads MTGTPGAATAGDG. A disordered region spans residues 1 to 22; the sequence is MTGTPGAATAGDGEAPERSPPF. Thr-2 is modified (N-acetylthreonine). Ser-38, Gly-39, Val-40, Gly-41, Lys-42, Thr-43, Cys-44, and Thr-62 together coordinate GTP. Thr-43 provides a ligand contact to Mg(2+). 2 consecutive short sequence motifs (switch) follow at residues 52–67 and 85–102; these read GAFLSGTFIATVGIDS and DTAGQERFRSVTHAYYRD. Mg(2+) contacts are provided by Thr-62 and Asp-85. GTP is bound by residues Gly-88, Asn-143, Lys-144, Asp-146, Ser-173, Ala-174, and Lys-175. Residues Cys-219 and Cys-220 are each lipidated (S-geranylgeranyl cysteine). Cys-220 carries the cysteine methyl ester modification. A propeptide spans 221–223 (removed in mature form); it reads SFV.

It belongs to the small GTPase superfamily. Rab family. As to quaternary structure, interacts with RIMS1. Interacts (in GDP-bound form) with RPGR, RPGR functions as guanine exchange factor (GEF). Mg(2+) serves as cofactor. As to expression, expressed in the retina (at protein level). Specifically expressed in the bone marrow mast cells.

The protein resides in the cytoplasmic vesicle. It is found in the cell projection. The protein localises to the cilium. It catalyses the reaction GTP + H2O = GDP + phosphate + H(+). Regulated by guanine nucleotide exchange factors (GEFs) including RPGR which promote the exchange of bound GDP for free GTP. Regulated by GTPase activating proteins (GAPs) which increase the GTP hydrolysis activity. Inhibited by GDP dissociation inhibitors (GDIs). Functionally, the small GTPases Rab are key regulators of intracellular membrane trafficking, from the formation of transport vesicles to their fusion with membranes. Rabs cycle between an inactive GDP-bound form and an active GTP-bound form that is able to recruit to membranes different sets of downstream effectors directly responsible for vesicle formation, movement, tethering and fusion. Acts as an organizer for autophagosome biogenesis in a GTP-dependent manner. Involved in retinal homeostasis by autophagy regulation. The chain is Ras-related protein Rab-37 from Mus musculus (Mouse).